Reading from the N-terminus, the 179-residue chain is Translation initiation factor IF-3 (179 aa).

It belongs to the IF-3 family. In terms of assembly, monomer.

The protein resides in the cytoplasm. Its function is as follows. IF-3 binds to the 30S ribosomal subunit and shifts the equilibrium between 70S ribosomes and their 50S and 30S subunits in favor of the free subunits, thus enhancing the availability of 30S subunits on which protein synthesis initiation begins. This is Translation initiation factor IF-3 from Lactococcus lactis subsp. lactis (strain IL1403) (Streptococcus lactis).